Here is a 145-residue protein sequence, read N- to C-terminus: Deoxyuridine 5'-triphosphate nucleotidohydrolase (145 aa).

Substrate is bound by residues 62–64 (RSG), Asn-75, 79–81 (TVD), and Lys-89.

Belongs to the dUTPase family. The cofactor is Mg(2+).

It carries out the reaction dUTP + H2O = dUMP + diphosphate + H(+). The protein operates within pyrimidine metabolism; dUMP biosynthesis; dUMP from dCTP (dUTP route): step 2/2. This enzyme is involved in nucleotide metabolism: it produces dUMP, the immediate precursor of thymidine nucleotides and it decreases the intracellular concentration of dUTP so that uracil cannot be incorporated into DNA. The chain is Deoxyuridine 5'-triphosphate nucleotidohydrolase from Helicobacter pylori (strain Shi470).